Here is a 763-residue protein sequence, read N- to C-terminus: Amyloid beta precursor like protein 2 (763 aa).

A signal peptide spans 1–31 (MAATGTAAAAATGRLLLLLLVGLTAPALALA). Topologically, residues 32–692 (GYIEALAANA…PLREDFSLSS (661 aa)) are extracellular. The segment at 46–139 (AVAEPQIAMF…PFKCLVGEFV (94 aa)) is GFLD subdomain. The E1 domain maps to 46–205 (AVAEPQIAMF…HGTEYVCCPQ (160 aa)). Intrachain disulfides connect Cys56–Cys80, Cys91–Cys133, Cys116–Cys123, Cys149–Cys203, Cys160–Cys190, and Cys174–Cys202. The segment at 147 to 205 (EKCQFFHKERMEVCENHQHWHTVVKEACLTQGMTLYSYGMLLPCGVDQFHGTEYVCCPQ) is cuBD subdomain. Cu cation is bound by residues His163, His167, and Tyr184. The tract at residues 211-299 (SVSKEEEEED…EPGSDGTMSD (89 aa)) is disordered. Composition is skewed to acidic residues over residues 215–233 (EEEEEDEEEEEEEDEEEDY) and 242–269 (TEADLEDFTEAAVDEDDEDEEEGEEVVE). Positions 270–282 (DRDYYYDTFKGDD) are enriched in basic and acidic residues. In terms of domain architecture, BPTI/Kunitz inhibitor spans 306–364 (VKAVCSQEAMTGPCRAVMPRWYFDLSKGKCVRFIYGGCGGNRNNFESEDYCMAVCKAMI). Cystine bridges form between Cys310-Cys360, Cys319-Cys343, and Cys335-Cys356. The E2 domain maps to 373 to 564 (DVDVYFETSA…QEIQEEIDEL (192 aa)). A Phosphoserine; by FAM20C modification is found at Ser590. Ser626 is a glycosylation site (O-linked (Xyl...) (chondroitin sulfate) serine). Residues 693–716 (SALIGLLVIAVAIATVIVISLVML) form a helical membrane-spanning segment. Residues 717-763 (RKRQYGTISHGIVEVDPMLTPEERHLNKMQNHGYENPTYKYLEQMQI) lie on the Cytoplasmic side of the membrane. Positions 749–763 (GYENPTYKYLEQMQI) are interaction with DAB2. An NPXY motif motif is present at residues 750–755 (YENPTY).

It belongs to the APP family. In terms of assembly, interacts with CPEB1. Interacts (via NPXY motif) with DAB2 (via PID domain); the interaction is impaired by tyrosine phosphorylation of the NPXY motif. Interacts (via cytoplasmic domain) with APBB2/FE65L. Interacts (via intracellular domain) with APBB3/FE65L2. Post-translationally, the BPTI/Kunitz inhibitor domain is O-glycosylated. In terms of tissue distribution, expressed in placenta, brain, heart, lung, liver, kidney and endothelial tissues.

It is found in the cell membrane. It localises to the nucleus. In terms of biological role, may play a role in the regulation of hemostasis. The soluble form may have inhibitory properties towards coagulation factors. May interact with cellular G-protein signaling pathways. May bind to the DNA 5'-GTCACATG-3'(CDEI box). Inhibits trypsin, chymotrypsin, plasmin, factor XIA and plasma and glandular kallikrein. Modulates the Cu/Zn nitric oxide-catalyzed autodegradation of GPC1 heparan sulfate side chains in fibroblasts. This chain is Amyloid beta precursor like protein 2, found in Homo sapiens (Human).